A 143-amino-acid chain; its full sequence is Nucleoside diphosphate kinase (143 aa).

ATP-binding residues include Lys-11, Phe-59, Arg-87, Thr-93, Arg-104, and Asn-114. His-117 functions as the Pros-phosphohistidine intermediate in the catalytic mechanism.

This sequence belongs to the NDK family. Homotetramer. Requires Mg(2+) as cofactor.

The protein localises to the cytoplasm. It carries out the reaction dZDP + ATP = dZTP + ADP. It catalyses the reaction a 2'-deoxyribonucleoside 5'-diphosphate + ATP = a 2'-deoxyribonucleoside 5'-triphosphate + ADP. The enzyme catalyses a ribonucleoside 5'-diphosphate + ATP = a ribonucleoside 5'-triphosphate + ADP. The protein operates within purine metabolism. Functionally, major role in the synthesis of nucleoside triphosphates other than ATP. The ATP gamma phosphate is transferred to the NDP beta phosphate via a ping-pong mechanism, using a phosphorylated active-site intermediate. (Microbial infection) Catalyzes the phosphorylation of dZDP to dZTP, when the bacterium is infected by a phage that produces the substrate for the synthesis of dZTP (2- amino-2'-deoxyadenosine 5'-triphosphate), which is then used by the phage as a DNA polymerase substrate. The protein is Nucleoside diphosphate kinase of Salmonella paratyphi C (strain RKS4594).